Reading from the N-terminus, the 87-residue chain is Acyl carrier protein 3 (87 aa).

A Carrier domain is found at Met-1 to Leu-79. Ser-39 carries the O-(pantetheine 4'-phosphoryl)serine modification.

The protein belongs to the acyl carrier protein (ACP) family. Post-translationally, 4'-phosphopantetheine is transferred from CoA to a specific serine of apo-ACP by AcpS. This modification is essential for activity because fatty acids are bound in thioester linkage to the sulfhydryl of the prosthetic group.

It is found in the cytoplasm. The protein operates within lipid metabolism; fatty acid biosynthesis. Functionally, carrier of the growing fatty acid chain in fatty acid biosynthesis. The protein is Acyl carrier protein 3 of Ralstonia nicotianae (strain ATCC BAA-1114 / GMI1000) (Ralstonia solanacearum).